The primary structure comprises 522 residues: MKNTQTNGTHPIIDKKPNGTLNGDHQEYPTFSQEKLDDSIKRGIDLQVFRYPSTGINVLIAGAGLGGITCALECWRKGHNVRIIDRSPSPVWTGDNVQIQPSAILLLRHWPDMGYEIEENQYDVDMSYYRQTGERIWGPAPPMFNDPEHLPGRRGFPSVNAHSRIKLYRAFLKQAERVGIYVEWGCKVVEYWEDVEGHAGGVVLENGEKRTADIVVAADGLRTKSMTIVPGMPDQLTTSGKAIYRAGYPVEHALKDPTVREMWNFKPEDKPIWQFWLGNGSHNMMCLTHDLAFWSFIHSHAESASESWIPDIDPAEVITEMEKNDAVHPAIAALIRTAPKGSVVNWQLKFRDPHEQWTSPGGHVVQLGDAAHAFLPTSGNGATQAIEDGVTLATCLQLAGKAQAANATKVYNKLRFQRVSCGQKMGFVNQQLKQHTDWDAIMKNPALIRSRYPKWVWSHDPEAYAYEKFAEALTHVVSGGRVPLVNTNFPKGHKYRHWTMKEVQEQIKAGQKLEDLQDGDWS.

The segment at 1-27 (MKNTQTNGTHPIIDKKPNGTLNGDHQE) is disordered. Position 164 (R164) interacts with FAD. The active site involves R245. FAD contacts are provided by D369 and A382.

It belongs to the paxM FAD-dependent monooxygenase family. FAD is required as a cofactor.

The protein operates within polyketide biosynthesis. In terms of biological role, FAD-dependent monooxygenase; part of the gene cluster that mediates the biosynthesis of fusarubins, highly pigmented naphthoquinones responsible for the coloration of the fruiting bodies. The non-reducing polyketide synthase FSR1 is responsible for the condensation of seven acetyl-CoA units to yield a haptaketide. After rings A and B are formed by aldol-type cyclization, the PKS-derived product is released as 6-O-demethylfusarubinaldehyde. Then, two hydroxyl groups at C-5 and C-10 are incorporated by FSR3, and simultaneously hydroxyl groups at C-6 and C-8 are methylated by FSR2. The aldehyde is, on the one hand, reduced by FSR3 to 8-O-methylfusarubin alcohol, which equilibrates mainly with 8-O-methylfusarubin and only small amounts of 8-O-methylnectriafurone. On the other hand, the aldehyde can be oxidized to form 8-O-methylfusarubinic acid, a reaction driven by FSR3 equilibrating with 8-O-methylfusarubinlactone, finally resulting in 8-O-methylanhydrofusarubinlactol after a further reduction step and loss of water. 8-O-Methylfusarubinic acid can also undergo decarboxylation, resulting in 8-O-methyl-13-hydroxynorjavanicin after another hydroxylation step at C-13. Both steps are most likely also accomplished by FSR3. No enzymatic function has been determined so far for either FSR4 and FSR5. Their deletion does not alter the product spectrum, but the possibility that they catalyze specific enzymatic steps during perithecium development cannot be ruled out. FSR4 might possess a regulatory function in the biosynthesis of fusarubins. This is FAD-dependent monooxygenase fsr3 from Gibberella fujikuroi (strain CBS 195.34 / IMI 58289 / NRRL A-6831) (Bakanae and foot rot disease fungus).